The sequence spans 149 residues: UPF0178 protein SERP0336 (149 aa).

This sequence belongs to the UPF0178 family.

In Staphylococcus epidermidis (strain ATCC 35984 / DSM 28319 / BCRC 17069 / CCUG 31568 / BM 3577 / RP62A), this protein is UPF0178 protein SERP0336.